The chain runs to 297 residues: MERERHVPVLLQDAIRYLNVRRGGTYADATLGLAGHSSAIARLLGPGGTLIAFDRDPEAMELAKSRLDALRAELGSEMPKVILHSTEFSEAEDLIEPGSLDGLLADFGVSSLQFDEAHRGFSFQADGPLDMRMNPRVGLTAAQVVNQFGEKELADLIYEFGEERRSRRIARAIVRARPVSTTAQLARVVSAAAPAMKSERIHPATRTFQALRIYVNQELGQIEALLKVAPKLLRKGGRLVVISFHSLEDRIAKDALREGGQQGIYEVLTRKPLTAGEEETDRNPRARSAKLRAAEKK.

Residues 34–36 (AGH), D54, F88, D106, and Q113 contribute to the S-adenosyl-L-methionine site. The tract at residues 272–297 (PLTAGEEETDRNPRARSAKLRAAEKK) is disordered.

The protein belongs to the methyltransferase superfamily. RsmH family.

It is found in the cytoplasm. The enzyme catalyses cytidine(1402) in 16S rRNA + S-adenosyl-L-methionine = N(4)-methylcytidine(1402) in 16S rRNA + S-adenosyl-L-homocysteine + H(+). Its function is as follows. Specifically methylates the N4 position of cytidine in position 1402 (C1402) of 16S rRNA. This Acidobacterium capsulatum (strain ATCC 51196 / DSM 11244 / BCRC 80197 / JCM 7670 / NBRC 15755 / NCIMB 13165 / 161) protein is Ribosomal RNA small subunit methyltransferase H.